A 245-amino-acid chain; its full sequence is 2,3-bisphosphoglycerate-dependent phosphoglycerate mutase (245 aa).

Substrate-binding positions include 8–15 (RHGQSLWN), 21–22 (TG), R60, 87–90 (ERHY), K98, 114–115 (RR), and 183–184 (GN). Catalysis depends on H9, which acts as the Tele-phosphohistidine intermediate. E87 acts as the Proton donor/acceptor in catalysis.

The protein belongs to the phosphoglycerate mutase family. BPG-dependent PGAM subfamily.

The catalysed reaction is (2R)-2-phosphoglycerate = (2R)-3-phosphoglycerate. Its pathway is carbohydrate degradation; glycolysis; pyruvate from D-glyceraldehyde 3-phosphate: step 3/5. Functionally, catalyzes the interconversion of 2-phosphoglycerate and 3-phosphoglycerate. The sequence is that of 2,3-bisphosphoglycerate-dependent phosphoglycerate mutase from Bacillus cereus (strain AH187).